Here is a 296-residue protein sequence, read N- to C-terminus: Peptide transport system permease protein SapC (296 aa).

Residues 1-28 (MPYDSVYSEKRPPGTLRTAWRKFYSDAP) are Cytoplasmic-facing. The chain crosses the membrane as a helical span at residues 29-49 (AMVGLYGCAGLALLCIFGGWI). Over 50–98 (APYGIDQQFLGYQLLPPSWSRYGEVSFFLGTDDLGRDVLSRLLSGAAPT) the chain is Periplasmic. The chain crosses the membrane as a helical span at residues 99–119 (VGGAFIVTLAATLCGLVLGVV). The ABC transmembrane type-1 domain maps to 99–284 (VGGAFIVTLA…LSVLLVNLLG (186 aa)). At 120–133 (AGATHGLRSAVLNH) the chain is on the cytoplasmic side. Residues 134 to 154 (ILDTLLSIPSLLLAIIVVAFA) traverse the membrane as a helical segment. Over 155 to 196 (GPHLSHAMFAVWLALLPRMVRSVYSMVHDELEKEYVIAARLD) the chain is Periplasmic. A helical membrane pass occupies residues 197–217 (GATTLNILWFAILPNITAGLV). Over 218–222 (TEITR) the chain is Cytoplasmic. Residues 223–243 (ALSMAILDIAALGFLDLGAQL) traverse the membrane as a helical segment. Topologically, residues 244–257 (PSPEWGAMLGDALE) are periplasmic. The helical transmembrane segment at 258-278 (LIYVAPWTVMLPGAAITLSVL) threads the bilayer. The Cytoplasmic portion of the chain corresponds to 279–296 (LVNLLGDGIRRAIIAGVE).

This sequence belongs to the binding-protein-dependent transport system permease family. OppBC subfamily.

Its subcellular location is the cell inner membrane. Its function is as follows. Involved in a peptide intake transport system that plays a role in the resistance to antimicrobial peptides. This Salmonella typhi protein is Peptide transport system permease protein SapC (sapC).